The following is a 159-amino-acid chain: Putative esterase DR_2406 (159 aa).

It belongs to the thioesterase PaaI family.

This Deinococcus radiodurans (strain ATCC 13939 / DSM 20539 / JCM 16871 / CCUG 27074 / LMG 4051 / NBRC 15346 / NCIMB 9279 / VKM B-1422 / R1) protein is Putative esterase DR_2406.